A 181-amino-acid polypeptide reads, in one-letter code: Adenine phosphoribosyltransferase (181 aa).

It belongs to the purine/pyrimidine phosphoribosyltransferase family. Homodimer.

Its subcellular location is the cytoplasm. It carries out the reaction AMP + diphosphate = 5-phospho-alpha-D-ribose 1-diphosphate + adenine. Its pathway is purine metabolism; AMP biosynthesis via salvage pathway; AMP from adenine: step 1/1. Its function is as follows. Catalyzes a salvage reaction resulting in the formation of AMP, that is energically less costly than de novo synthesis. In Vibrio atlanticus (strain LGP32) (Vibrio splendidus (strain Mel32)), this protein is Adenine phosphoribosyltransferase.